The chain runs to 205 residues: CASP-like protein 0U1 (205 aa).

Residues 1-38 (MDDAPGASDEAREPLLKRVGASVEGTSLMNHRLMKNPK) are Cytoplasmic-facing. The chain crosses the membrane as a helical span at residues 39 to 57 (FRALLVESLMALTTFSFMA). Residues 58–89 (KQTEGLAGPELSTLNDCGEAGCGFTKFYQFKG) lie on the Extracellular side of the membrane. A helical transmembrane segment spans residues 90 to 110 (VVGVYAGFWAYTVILIAMYVI). The Cytoplasmic segment spans residues 111 to 124 (RKAPPPGTEFASYA). Residues 125–145 (LFTAAMATFVVMSITECASVV) form a helical membrane-spanning segment. Residues 146–159 (LSSDYYVCKNADYS) are Extracellular-facing. Residues 160–180 (LVSLIFAAATIVLNCLTCAFA) traverse the membrane as a helical segment. Over 181–205 (WRQWGELKFVGLPKTLSALTETYPG) the chain is Cytoplasmic.

It belongs to the Casparian strip membrane proteins (CASP) family. Homodimer and heterodimers.

Its subcellular location is the cell membrane. The protein is CASP-like protein 0U1 of Ostreococcus lucimarinus (strain CCE9901).